Here is a 552-residue protein sequence, read N- to C-terminus: Thermosome subunit beta (552 aa).

The interval 531–552 (AGKKGGSEPGGKKEKEEKSSED) is disordered. The segment covering 540–552 (GGKKEKEEKSSED) has biased composition (basic and acidic residues).

It belongs to the TCP-1 chaperonin family. In terms of assembly, forms a heterooligomeric complex of two stacked nine-membered rings; one of alpha and the other of beta subunits. Sometimes called a 'rosettasome'.

Its subcellular location is the cytoplasm. It carries out the reaction ATP + H2O = ADP + phosphate + H(+). Functionally, molecular chaperone; binds unfolded polypeptides in vitro, stimulates protein folding and has ATPase activity. One of the most abundant proteins in the cell at all temperatures. The polypeptide is Thermosome subunit beta (thsB) (Saccharolobus shibatae (strain ATCC 51178 / DSM 5389 / JCM 8931 / NBRC 15437 / B12) (Sulfolobus shibatae)).